Consider the following 191-residue polypeptide: Adenylate kinase (191 aa).

Position 11-16 (11-16) interacts with ATP; that stretch reads GSGKGT. An NMP region spans residues 31–60; it reads STGEILRREIKDKTELGKIAEEYINQGQLL. AMP-binding positions include threonine 32, arginine 37, 58–60, 86–89, and glutamine 93; these read QLL and GFPR. The interval 127-137 is LID; sequence KRGKLFSRKDD. Arginine 128 lines the ATP pocket. AMP contacts are provided by arginine 134 and arginine 145. Asparagine 173 contacts ATP.

Belongs to the adenylate kinase family. As to quaternary structure, monomer.

The protein localises to the cytoplasm. The enzyme catalyses AMP + ATP = 2 ADP. The protein operates within purine metabolism; AMP biosynthesis via salvage pathway; AMP from ADP: step 1/1. Catalyzes the reversible transfer of the terminal phosphate group between ATP and AMP. Plays an important role in cellular energy homeostasis and in adenine nucleotide metabolism. The chain is Adenylate kinase from Azobacteroides pseudotrichonymphae genomovar. CFP2.